Consider the following 370-residue polypeptide: Galactose-1-phosphate uridylyltransferase (370 aa).

Residues cysteine 51 and cysteine 54 each contribute to the Zn(2+) site. Residues alanine 60 and 76-77 (NG) contribute to the UDP-alpha-D-glucose site. Histidine 121 serves as a coordination point for Zn(2+). UDP-alpha-D-glucose is bound at residue asparagine 166. A Zn(2+)-binding site is contributed by histidine 177. Histidine 179 functions as the Tele-UMP-histidine intermediate in the catalytic mechanism. Residue glutamine 181 coordinates UDP-alpha-D-glucose. Fe cation contacts are provided by glutamate 195, histidine 294, histidine 311, and histidine 313. Residues 326 to 329 (KFLV) and 331 to 332 (FE) contribute to the UDP-alpha-D-glucose site.

It belongs to the galactose-1-phosphate uridylyltransferase type 1 family. As to quaternary structure, homodimer. Zn(2+) is required as a cofactor.

The enzyme catalyses alpha-D-galactose 1-phosphate + UDP-alpha-D-glucose = alpha-D-glucose 1-phosphate + UDP-alpha-D-galactose. The protein operates within carbohydrate metabolism; galactose metabolism. This chain is Galactose-1-phosphate uridylyltransferase (GAL7), found in Kluyveromyces lactis (strain ATCC 8585 / CBS 2359 / DSM 70799 / NBRC 1267 / NRRL Y-1140 / WM37) (Yeast).